The following is a 148-amino-acid chain: Deoxyuridine 5'-triphosphate nucleotidohydrolase (148 aa).

Residues 65-67, asparagine 78, 82-84, and lysine 92 contribute to the substrate site; these read RSG and TID.

This sequence belongs to the dUTPase family. Mg(2+) serves as cofactor.

It catalyses the reaction dUTP + H2O = dUMP + diphosphate + H(+). It participates in pyrimidine metabolism; dUMP biosynthesis; dUMP from dCTP (dUTP route): step 2/2. In terms of biological role, this enzyme is involved in nucleotide metabolism: it produces dUMP, the immediate precursor of thymidine nucleotides and it decreases the intracellular concentration of dUTP so that uracil cannot be incorporated into DNA. This is Deoxyuridine 5'-triphosphate nucleotidohydrolase from Chlorobium phaeovibrioides (strain DSM 265 / 1930) (Prosthecochloris vibrioformis (strain DSM 265)).